Reading from the N-terminus, the 150-residue chain is Large ribosomal subunit protein bL9 (150 aa).

This sequence belongs to the bacterial ribosomal protein bL9 family.

Functionally, binds to the 23S rRNA. The chain is Large ribosomal subunit protein bL9 from Clavibacter sepedonicus (Clavibacter michiganensis subsp. sepedonicus).